Consider the following 170-residue polypeptide: Adenine phosphoribosyltransferase (170 aa).

The protein belongs to the purine/pyrimidine phosphoribosyltransferase family. In terms of assembly, homodimer.

It is found in the cytoplasm. The catalysed reaction is AMP + diphosphate = 5-phospho-alpha-D-ribose 1-diphosphate + adenine. It functions in the pathway purine metabolism; AMP biosynthesis via salvage pathway; AMP from adenine: step 1/1. In terms of biological role, catalyzes a salvage reaction resulting in the formation of AMP, that is energically less costly than de novo synthesis. This Symbiobacterium thermophilum (strain DSM 24528 / JCM 14929 / IAM 14863 / T) protein is Adenine phosphoribosyltransferase.